Here is a 480-residue protein sequence, read N- to C-terminus: Glutamate--tRNA ligase (480 aa).

The short motif at 8-18 (PSPTGPLHIGG) is the 'HIGH' region element. Positions 249-253 (KMSKR) match the 'KMSKS' region motif. K252 contacts ATP.

This sequence belongs to the class-I aminoacyl-tRNA synthetase family. Glutamate--tRNA ligase type 1 subfamily. Monomer.

Its subcellular location is the cytoplasm. It catalyses the reaction tRNA(Glu) + L-glutamate + ATP = L-glutamyl-tRNA(Glu) + AMP + diphosphate. Functionally, catalyzes the attachment of glutamate to tRNA(Glu) in a two-step reaction: glutamate is first activated by ATP to form Glu-AMP and then transferred to the acceptor end of tRNA(Glu). In Carboxydothermus hydrogenoformans (strain ATCC BAA-161 / DSM 6008 / Z-2901), this protein is Glutamate--tRNA ligase.